The chain runs to 505 residues: MGLDKDGISNIAKERIASSLVEDTKDLAAELCKHFYNQGWVSGTGGSITLKVLESDVDVQERLIVMAPSGVQKERMLPVDMYVLSSDGTVLSAPPAKGAPHKPPKCSECCPLFLKAYKMRNAGAVIHSHGLESCLATMINPTAKEFRITHMEMIKGIAGHGYYDELVVPIIENSAREYELTDALAAAMEAYPKATAVLVRNHGIYIWGDSWISAKTQAECYHYLFNAALKLHQLGLDPADAKHGPLTRPQTLPDFANKRATSKNVFVLDIEGTTTPISFVTEVLFPYARENVSSFFKSTYNSPETLNDIRLLRDQVHEDLRNNVPGATEIPVESAGIDAVVAAIEKNVQAMIKADRKVTALKELQGHIWRIGYENGELKGSVFEDVPEALAKWDARGIKTYIYSSGSREAQKLIFGNTNFGDLRVYLSGFFDTTIGHKREARSYKEIFLTLGVDHPSCITFATDVLAEAVAAKEAGLQAVLLLRPGNAPLPSDHGFRTAKSLLEL.

A methylthioribulose-1-phosphate dehydratase region spans residues 1–237 (MGLDKDGISN…ALKLHQLGLD (237 aa)). Residue Cys-109 coordinates substrate. Residues His-127 and His-129 each coordinate Zn(2+). Glu-152 serves as the catalytic Proton donor/acceptor; for methylthioribulose-1-phosphate dehydratase activity. His-202 is a Zn(2+) binding site. Residues 266-505 (FVLDIEGTTT…FRTAKSLLEL (240 aa)) are enolase-phosphatase E1. Mg(2+) contacts are provided by Asp-269 and Glu-271. Residues 404-405 (SS) and Lys-438 each bind substrate. Asp-464 lines the Mg(2+) pocket.

This sequence in the N-terminal section; belongs to the aldolase class II family. MtnB subfamily. In the C-terminal section; belongs to the HAD-like hydrolase superfamily. MasA/MtnC family. Zn(2+) serves as cofactor. Mg(2+) is required as a cofactor.

It catalyses the reaction 5-(methylsulfanyl)-D-ribulose 1-phosphate = 5-methylsulfanyl-2,3-dioxopentyl phosphate + H2O. The enzyme catalyses 5-methylsulfanyl-2,3-dioxopentyl phosphate + H2O = 1,2-dihydroxy-5-(methylsulfanyl)pent-1-en-3-one + phosphate. It participates in amino-acid biosynthesis; L-methionine biosynthesis via salvage pathway; L-methionine from S-methyl-5-thio-alpha-D-ribose 1-phosphate: step 2/6. It functions in the pathway amino-acid biosynthesis; L-methionine biosynthesis via salvage pathway; L-methionine from S-methyl-5-thio-alpha-D-ribose 1-phosphate: step 3/6. The protein operates within amino-acid biosynthesis; L-methionine biosynthesis via salvage pathway; L-methionine from S-methyl-5-thio-alpha-D-ribose 1-phosphate: step 4/6. The protein is Probable bifunctional methylthioribulose-1-phosphate dehydratase/enolase-phosphatase E1 of Physcomitrium patens (Spreading-leaved earth moss).